Consider the following 185-residue polypeptide: UPF0149 protein PD_0802 (185 aa).

This sequence belongs to the UPF0149 family.

In Xylella fastidiosa (strain Temecula1 / ATCC 700964), this protein is UPF0149 protein PD_0802.